The primary structure comprises 474 residues: Glutamate--tRNA ligase (474 aa).

Positions 11–21 (PSPTGFLHIGG) match the 'HIGH' region motif. The 'KMSKS' region motif lies at 240–244 (KLSKR). K243 contributes to the ATP binding site.

The protein belongs to the class-I aminoacyl-tRNA synthetase family. Glutamate--tRNA ligase type 1 subfamily. As to quaternary structure, monomer.

The protein resides in the cytoplasm. The catalysed reaction is tRNA(Glu) + L-glutamate + ATP = L-glutamyl-tRNA(Glu) + AMP + diphosphate. Catalyzes the attachment of glutamate to tRNA(Glu) in a two-step reaction: glutamate is first activated by ATP to form Glu-AMP and then transferred to the acceptor end of tRNA(Glu). The sequence is that of Glutamate--tRNA ligase from Nitrobacter hamburgensis (strain DSM 10229 / NCIMB 13809 / X14).